Here is a 277-residue protein sequence, read N- to C-terminus: Undecaprenyl-diphosphatase (277 aa).

6 helical membrane passes run M88–D108, M117–V137, F157–L179, S191–V211, L227–V247, and F255–I275.

This sequence belongs to the UppP family.

It is found in the cell membrane. It catalyses the reaction di-trans,octa-cis-undecaprenyl diphosphate + H2O = di-trans,octa-cis-undecaprenyl phosphate + phosphate + H(+). Its function is as follows. Catalyzes the dephosphorylation of undecaprenyl diphosphate (UPP). Confers resistance to bacitracin. In Pseudarthrobacter chlorophenolicus (strain ATCC 700700 / DSM 12829 / CIP 107037 / JCM 12360 / KCTC 9906 / NCIMB 13794 / A6) (Arthrobacter chlorophenolicus), this protein is Undecaprenyl-diphosphatase.